Here is a 600-residue protein sequence, read N- to C-terminus: Forkhead box protein O (600 aa).

T49 bears the Phosphothreonine; by PKB/AKT1 mark. A Phosphoserine modification is found at S80. The segment at residues 100-206 (WGNLSYADLI…ETSRYEKRRG (107 aa)) is a DNA-binding region (fork-head). Disordered regions lie at residues 187-210 (KSVR…RAKK), 222-283 (GLND…LEPD), 319-364 (QQGF…TPGY), and 580-600 (LNAR…SWVH). S195 is modified (phosphoserine; by PKB/AKT1). 2 stretches are compositionally biased toward polar residues: residues 226–235 (ATPSPSSSVS) and 261–270 (RASSNASSCG). A Phosphoserine; by PKB/AKT1 modification is found at S264. Phosphoserine is present on residues S267, S268, and S273. A compositionally biased stretch (pro residues) spans 330–342 (TQPPPPPYQPPQP). Over residues 343-354 (QQQQQQGQQPSP) the composition is skewed to low complexity.

Interacts with melt.

The protein resides in the cytoplasm. The protein localises to the nucleus. Its function is as follows. Transcription factor involved in the regulation of the insulin signaling pathway. Consistently activates both the downstream target Thor\d4EBP and the feedback control target InR. Involved in negative regulation of the cell cycle, modulating cell growth and proliferation. In response to cellular stresses, such as nutrient deprivation or increased levels of reactive oxygen species, foxo is activated and inhibits growth through the action of target genes such as Thor. Foxo activated in the adult fat body can regulate lifespan in adults; an insulin peptide itself may function as one secondary messenger of insulin-regulated aging. Also regulates Lip4, homolog of human acid lipases, thereby acting as a key modulator of lipid metabolism by insulin signaling and integrates insulin responses to glucose and lipid homeostasis. The sequence is that of Forkhead box protein O from Drosophila ananassae (Fruit fly).